The primary structure comprises 143 residues: Hemoglobin cathodic subunit alpha (143 aa).

S2 bears the N-acetylserine mark. Positions 2 to 143 constitute a Globin domain; the sequence is SLTAKDKTLV…VSAALADKYR (142 aa). Residue H59 participates in O2 binding. H89 is a binding site for heme b.

This sequence belongs to the globin family. As to quaternary structure, heterotetramer of two alpha chains and two beta chains. In terms of tissue distribution, red blood cells.

Functionally, involved in oxygen transport from the gills to the various peripheral tissues. In Conger conger (Conger eel), this protein is Hemoglobin cathodic subunit alpha.